We begin with the raw amino-acid sequence, 248 residues long: UPF0736 protein Bcer98_0893 (248 aa).

The protein belongs to the UPF0736 family.

The chain is UPF0736 protein Bcer98_0893 from Bacillus cytotoxicus (strain DSM 22905 / CIP 110041 / 391-98 / NVH 391-98).